The chain runs to 323 residues: Calcium homeostasis modulator protein 2 (323 aa).

Topologically, residues 1–21 (MAALIAENFRFLSLFFKSKDV) are cytoplasmic. The central pore stretch occupies residues 14 to 39 (LFFKSKDVMIFNGLVALGTVGSQELF). The chain crosses the membrane as a helical span at residues 22–43 (MIFNGLVALGTVGSQELFSVVA). The Extracellular segment spans residues 44-52 (FHCPCSPAR). Cystine bridges form between C46/C130 and C48/C162. A helical transmembrane segment spans residues 53 to 76 (NYLYGLTAIGVPALALFLIGVILN). At 77 to 101 (NHTWNLVAECQYRRAKNCSAAPNFL) the chain is on the cytoplasmic side. A helical membrane pass occupies residues 102-132 (LLSSILGRAAVAPVTWSVISLLRGEAYVCAL). At 133–179 (SEFVDPSSLTAGDKGFPPAHATEVLARFPCGEGPANLSSFREEVSRR) the chain is on the extracellular side. The segment at 145 to 152 (DKGFPPAH) is hemichannel docking. Residues 180 to 206 (LKYESQLFGWLLIGVVAILVFLTKCLK) traverse the membrane as a helical segment. Over 207-323 (HYCSPLSYRQ…DNVEMALLTA (117 aa)) the chain is Cytoplasmic. An intersubunit interaction region spans residues 214–251 (YRQEAYWAQYRTNEDQLFQRTAEVHSRVLAANNVRRFF).

Belongs to the CALHM family. As to quaternary structure, homo-undecamer. Two undecameric hemichannels can assemble in a head-to-head manner to form a gap junction. In terms of tissue distribution, neuron, astrocyte, and microglia.

It localises to the cell membrane. The enzyme catalyses ATP(in) = ATP(out). With respect to regulation, inhibited by divalent cations such as Co(2+) and Ni(2+). Functionally, pore-forming subunit of Ca(2+) homeostasis modulator channels. Mediates ATP release from astrocytes and ATP-induced Ca(2+) influx in microglia thus regulating neuronal ATP and Ca(2+) homeostasis, synaptic transmission and neuroinflammatory response. May form intercellular gap junctions. The gating mechanism remains unknown. The protein is Calcium homeostasis modulator protein 2 of Mus musculus (Mouse).